The chain runs to 876 residues: Alanine--tRNA ligase (876 aa).

4 residues coordinate Zn(2+): histidine 566, histidine 570, cysteine 667, and histidine 671.

The protein belongs to the class-II aminoacyl-tRNA synthetase family. Zn(2+) serves as cofactor.

The protein localises to the cytoplasm. It carries out the reaction tRNA(Ala) + L-alanine + ATP = L-alanyl-tRNA(Ala) + AMP + diphosphate. Functionally, catalyzes the attachment of alanine to tRNA(Ala) in a two-step reaction: alanine is first activated by ATP to form Ala-AMP and then transferred to the acceptor end of tRNA(Ala). Also edits incorrectly charged Ser-tRNA(Ala) and Gly-tRNA(Ala) via its editing domain. This Albidiferax ferrireducens (strain ATCC BAA-621 / DSM 15236 / T118) (Rhodoferax ferrireducens) protein is Alanine--tRNA ligase.